The chain runs to 438 residues: Glutamate--tRNA ligase 2 (438 aa).

A 'HIGH' region motif is present at residues 6–16 (PSPTGDMHTGN). The short motif at 231–235 (KMSKR) is the 'KMSKS' region element. An ATP-binding site is contributed by K234.

Belongs to the class-I aminoacyl-tRNA synthetase family. Glutamate--tRNA ligase type 1 subfamily. As to quaternary structure, monomer.

Its subcellular location is the cytoplasm. It carries out the reaction tRNA(Glu) + L-glutamate + ATP = L-glutamyl-tRNA(Glu) + AMP + diphosphate. Catalyzes the attachment of glutamate to tRNA(Glu) in a two-step reaction: glutamate is first activated by ATP to form Glu-AMP and then transferred to the acceptor end of tRNA(Glu). This Wolinella succinogenes (strain ATCC 29543 / DSM 1740 / CCUG 13145 / JCM 31913 / LMG 7466 / NCTC 11488 / FDC 602W) (Vibrio succinogenes) protein is Glutamate--tRNA ligase 2.